The primary structure comprises 444 residues: Methylenetetrahydrofolate--tRNA-(uracil-5-)-methyltransferase TrmFO (444 aa).

Residue 10 to 15 participates in FAD binding; the sequence is GAGLAG.

This sequence belongs to the MnmG family. TrmFO subfamily. FAD is required as a cofactor.

It is found in the cytoplasm. The enzyme catalyses uridine(54) in tRNA + (6R)-5,10-methylene-5,6,7,8-tetrahydrofolate + NADH + H(+) = 5-methyluridine(54) in tRNA + (6S)-5,6,7,8-tetrahydrofolate + NAD(+). It catalyses the reaction uridine(54) in tRNA + (6R)-5,10-methylene-5,6,7,8-tetrahydrofolate + NADPH + H(+) = 5-methyluridine(54) in tRNA + (6S)-5,6,7,8-tetrahydrofolate + NADP(+). In terms of biological role, catalyzes the folate-dependent formation of 5-methyl-uridine at position 54 (M-5-U54) in all tRNAs. The protein is Methylenetetrahydrofolate--tRNA-(uracil-5-)-methyltransferase TrmFO of Streptococcus pneumoniae serotype 2 (strain D39 / NCTC 7466).